The sequence spans 291 residues: Probable L-ascorbate peroxidase 3, peroxisomal (291 aa).

Residue His41 is the Proton acceptor of the active site. The tract at residues 114 to 133 is disordered; it reads YVPGRRDSSDSPEEGRLPDA. The span at 116-133 shows a compositional bias: basic and acidic residues; it reads PGRRDSSDSPEEGRLPDA. Residue His161 participates in heme b binding. Residues Thr162, Thr178, and Asp185 each contribute to the K(+) site. Residues 263–283 form a helical membrane-spanning segment; it reads LLMQTAAGVAVAAAVVAWAYL.

The protein belongs to the peroxidase family. Ascorbate peroxidase subfamily. The cofactor is heme b. Expressed in stems.

The protein resides in the peroxisome membrane. The enzyme catalyses L-ascorbate + H2O2 = L-dehydroascorbate + 2 H2O. Its function is as follows. Plays a key role in hydrogen peroxide removal. In Oryza sativa subsp. japonica (Rice), this protein is Probable L-ascorbate peroxidase 3, peroxisomal.